A 1433-amino-acid chain; its full sequence is DNA-directed RNA polymerase subunit beta' (1433 aa).

Residues cysteine 66, cysteine 68, cysteine 81, and cysteine 84 each coordinate Zn(2+). Mg(2+) is bound by residues aspartate 473, aspartate 475, and aspartate 477. Zn(2+)-binding residues include cysteine 815, cysteine 889, cysteine 896, and cysteine 899.

The protein belongs to the RNA polymerase beta' chain family. In terms of assembly, the RNAP catalytic core consists of 2 alpha, 1 beta, 1 beta' and 1 omega subunit. When a sigma factor is associated with the core the holoenzyme is formed, which can initiate transcription. It depends on Mg(2+) as a cofactor. The cofactor is Zn(2+).

It catalyses the reaction RNA(n) + a ribonucleoside 5'-triphosphate = RNA(n+1) + diphosphate. Functionally, DNA-dependent RNA polymerase catalyzes the transcription of DNA into RNA using the four ribonucleoside triphosphates as substrates. The protein is DNA-directed RNA polymerase subunit beta' of Porphyromonas gingivalis (strain ATCC 33277 / DSM 20709 / CIP 103683 / JCM 12257 / NCTC 11834 / 2561).